The chain runs to 186 residues: ATP-dependent protease subunit HslV (186 aa).

Thr14 is an active-site residue. Na(+) is bound by residues Ala168, Cys171, and Thr174.

The protein belongs to the peptidase T1B family. HslV subfamily. As to quaternary structure, a double ring-shaped homohexamer of HslV is capped on each side by a ring-shaped HslU homohexamer. The assembly of the HslU/HslV complex is dependent on binding of ATP.

The protein localises to the cytoplasm. The enzyme catalyses ATP-dependent cleavage of peptide bonds with broad specificity.. With respect to regulation, allosterically activated by HslU binding. Functionally, protease subunit of a proteasome-like degradation complex believed to be a general protein degrading machinery. This Bradyrhizobium sp. (strain BTAi1 / ATCC BAA-1182) protein is ATP-dependent protease subunit HslV.